The following is a 210-amino-acid chain: Viral protein 1 (210 aa).

This Chaetoceros (Chaetoceros sp. DNA virus 7) protein is Viral protein 1.